Here is a 461-residue protein sequence, read N- to C-terminus: tRNA modification GTPase MnmE (461 aa).

Arg-21, Glu-87, and Lys-126 together coordinate (6S)-5-formyl-5,6,7,8-tetrahydrofolate. The region spanning Gln-222 to Thr-384 is the TrmE-type G domain. Asn-232 is a binding site for K(+). GTP contacts are provided by residues Asn-232 to Ser-237, Ser-251 to Thr-257, and Asp-276 to Gly-279. Position 236 (Ser-236) interacts with Mg(2+). K(+)-binding residues include Ser-251, Val-253, and Thr-256. Thr-257 is a Mg(2+) binding site. Lys-461 contributes to the (6S)-5-formyl-5,6,7,8-tetrahydrofolate binding site.

This sequence belongs to the TRAFAC class TrmE-Era-EngA-EngB-Septin-like GTPase superfamily. TrmE GTPase family. In terms of assembly, homodimer. Heterotetramer of two MnmE and two MnmG subunits. K(+) is required as a cofactor.

It localises to the cytoplasm. Functionally, exhibits a very high intrinsic GTPase hydrolysis rate. Involved in the addition of a carboxymethylaminomethyl (cmnm) group at the wobble position (U34) of certain tRNAs, forming tRNA-cmnm(5)s(2)U34. This is tRNA modification GTPase MnmE from Leptospira biflexa serovar Patoc (strain Patoc 1 / Ames).